The chain runs to 699 residues: Elongation factor G (699 aa).

Residues E8–I283 form the tr-type G domain. Residues A17 to T24, D81 to H85, and N135 to D138 contribute to the GTP site.

This sequence belongs to the TRAFAC class translation factor GTPase superfamily. Classic translation factor GTPase family. EF-G/EF-2 subfamily.

It is found in the cytoplasm. In terms of biological role, catalyzes the GTP-dependent ribosomal translocation step during translation elongation. During this step, the ribosome changes from the pre-translocational (PRE) to the post-translocational (POST) state as the newly formed A-site-bound peptidyl-tRNA and P-site-bound deacylated tRNA move to the P and E sites, respectively. Catalyzes the coordinated movement of the two tRNA molecules, the mRNA and conformational changes in the ribosome. This chain is Elongation factor G, found in Rickettsia conorii (strain ATCC VR-613 / Malish 7).